A 210-amino-acid chain; its full sequence is Small ribosomal subunit protein uS3 (210 aa).

Positions 17–86 (IDEFLEKELR…NPQIDVQEIK (70 aa)) constitute a KH type-2 domain.

It belongs to the universal ribosomal protein uS3 family. As to quaternary structure, part of the 30S ribosomal subunit.

In terms of biological role, binds the lower part of the 30S subunit head. In Pyrococcus abyssi (strain GE5 / Orsay), this protein is Small ribosomal subunit protein uS3.